A 131-amino-acid polypeptide reads, in one-letter code: MDKNLLEAVKFDEKGLVCAIAQDAETKRILMVAWMNAEALQKTVETGFAHYYSRSRQKQWMKGEESGHTQKVRELRLDCDGDAIVMLIAQNGGIACHTGRESCFYKVWRGGAWETADAVLKDEKEIYGSTH.

Mg(2+) is bound at residue aspartate 78. Cysteine 79 contributes to the Zn(2+) binding site. Mg(2+)-binding residues include aspartate 80 and aspartate 82. Residues cysteine 96 and cysteine 103 each coordinate Zn(2+).

This sequence belongs to the PRA-CH family. As to quaternary structure, homodimer. Mg(2+) serves as cofactor. The cofactor is Zn(2+).

Its subcellular location is the cytoplasm. The enzyme catalyses 1-(5-phospho-beta-D-ribosyl)-5'-AMP + H2O = 1-(5-phospho-beta-D-ribosyl)-5-[(5-phospho-beta-D-ribosylamino)methylideneamino]imidazole-4-carboxamide. Its pathway is amino-acid biosynthesis; L-histidine biosynthesis; L-histidine from 5-phospho-alpha-D-ribose 1-diphosphate: step 3/9. Catalyzes the hydrolysis of the adenine ring of phosphoribosyl-AMP. The chain is Phosphoribosyl-AMP cyclohydrolase from Neisseria meningitidis serogroup A / serotype 4A (strain DSM 15465 / Z2491).